A 205-amino-acid polypeptide reads, in one-letter code: Methylthioribulose-1-phosphate dehydratase (205 aa).

Zn(2+) contacts are provided by histidine 96 and histidine 98.

The protein belongs to the aldolase class II family. MtnB subfamily. The cofactor is Zn(2+).

It catalyses the reaction 5-(methylsulfanyl)-D-ribulose 1-phosphate = 5-methylsulfanyl-2,3-dioxopentyl phosphate + H2O. It participates in amino-acid biosynthesis; L-methionine biosynthesis via salvage pathway; L-methionine from S-methyl-5-thio-alpha-D-ribose 1-phosphate: step 2/6. Catalyzes the dehydration of methylthioribulose-1-phosphate (MTRu-1-P) into 2,3-diketo-5-methylthiopentyl-1-phosphate (DK-MTP-1-P). The sequence is that of Methylthioribulose-1-phosphate dehydratase from Exiguobacterium sp. (strain ATCC BAA-1283 / AT1b).